The following is a 357-amino-acid chain: MSSSSSWRRAATVMLAAGWTHSSPAGFRLLLLQRAQNQRFLPGAHVFPGGVLDAADSSPDWVRLFAPRHTPPRFGLGPEPPRQPPFPGLSHGDADPAALPDDVALRICAIREAFEEAGVLLLRPRDAAPASQEPSQALSPPAGLAEWRSRVRSDPRCFLQLCAHLDCTPDIWALHDWGGWLTPYGRTIRRFDTTFFLCCLRDIPRVEPDVAEVVGYQWLSPSEATECFLSKEIWLAPPQFYEMRRLENFASLSALYRFCSDRPSEVPEKWLPIILLTSDGTIHLLPGDELYVKDSDFLEKNMSTDKKTEEIVKEGKVLNRVVIHSPYVYEIYMTLPSENKHVYPRNYIVNKRCTAHL.

The region spanning 10–242 (AATVMLAAGW…IWLAPPQFYE (233 aa)) is the Nudix hydrolase domain. The disordered stretch occupies residues 72–93 (PRFGLGPEPPRQPPFPGLSHGD). Pro residues predominate over residues 78–87 (PEPPRQPPFP). The Nudix box signature appears at 97-118 (AALPDDVALRICAIREAFEEAG). Positions 112 and 116 each coordinate Mg(2+). N6-succinyllysine is present on Lys300. The Microbody targeting signal signature appears at 355–357 (AHL).

This sequence belongs to the Nudix hydrolase family. In terms of assembly, monomer. Mg(2+) serves as cofactor. Mn(2+) is required as a cofactor. Highly expressed in the kidneys, with lower levels in skeletal muscle and brain (at protein level).

Its subcellular location is the peroxisome. It carries out the reaction an acyl-CoA + H2O = an acyl-4'-phosphopantetheine + adenosine 3',5'-bisphosphate + 2 H(+). The enzyme catalyses CoA + H2O = (R)-4'-phosphopantetheine + adenosine 3',5'-bisphosphate + 2 H(+). The catalysed reaction is hexanoyl-CoA + H2O = hexanoyl-4'-phosphopantetheine + adenosine 3',5'-bisphosphate + 2 H(+). It catalyses the reaction octanoyl-CoA + H2O = S-octanoyl-4'-phosphopantetheine + adenosine 3',5'-bisphosphate + 2 H(+). It carries out the reaction butanoyl-CoA + H2O = S-butanoyl-4'-phosphopantetheine + adenosine 3',5'-bisphosphate + 2 H(+). The enzyme catalyses propanoyl-CoA + H2O = propanoyl-4'-phosphopantetheine + adenosine 3',5'-bisphosphate + 2 H(+). The catalysed reaction is malonyl-CoA + H2O = malonyl-4'-phosphopantetheine + adenosine 3',5'-bisphosphate + 2 H(+). It catalyses the reaction succinyl-CoA + H2O = succinyl-4'-phosphopantetheine + adenosine 3',5'-bisphosphate + 2 H(+). It carries out the reaction choloyl-CoA + H2O = S-choloyl-4'-phosphopantetheine + adenosine 3',5'-bisphosphate + 2 H(+). The enzyme catalyses 4,8-dimethylnonanoyl-CoA + H2O = S-(4,8-dimethylnonanoyl)-4'-phosphopantetheine + adenosine 3',5'-bisphosphate + 2 H(+). The catalysed reaction is (9Z,12Z,15Z)-octadecatrienoyl-CoA + H2O = S-(9Z,12Z,15Z-octadecatrienoyl)-4'-phosphopantetheine + adenosine 3',5'-bisphosphate + 2 H(+). It catalyses the reaction (9Z,12Z)-octadecadienoyl-CoA + H2O = S-(9Z,12Z-octadecadienoyl)-4'-phosphopantetheine + adenosine 3',5'-bisphosphate + 2 H(+). It carries out the reaction (9Z)-hexadecenoyl-CoA + H2O = S-(9Z-hexadecenoyl)-4'-phosphopantetheine + adenosine 3',5'-bisphosphate + 2 H(+). The enzyme catalyses (9Z)-tetradecenoyl-CoA + H2O = S-(9Z-tetradecenoyl)-4'-phosphopantetheine + adenosine 3',5'-bisphosphate + 2 H(+). The catalysed reaction is (6Z)-octenoyl-CoA + H2O = S-(6Z-octenoyl)-4'-phosphopantetheine + adenosine 3',5'-bisphosphate + 2 H(+). It catalyses the reaction hexadecanoyl-CoA + H2O = S-hexadecanoyl-4'-phosphopantetheine + adenosine 3',5'-bisphosphate + 2 H(+). It carries out the reaction tetradecanoyl-CoA + H2O = tetradecanoyl-4'-phosphopantetheine + adenosine 3',5'-bisphosphate + 2 H(+). The enzyme catalyses dodecanoyl-CoA + H2O = S-dodecanoyl-4'-phosphopantetheine + adenosine 3',5'-bisphosphate + 2 H(+). The catalysed reaction is a 5'-end CoA-ribonucleoside in mRNA + H2O = a 5'-end phospho-adenosine-phospho-ribonucleoside in mRNA + (R)-4'-phosphopantetheine + 2 H(+). Inhibited by chenodeoxycholic acid (CDCA) and its conjugated derivatives, taurochenodeoxycholic acid and glycochenodeoxycholic acid. Inhibited by fluoride. Fatty acyl-coenzyme A (CoA) diphosphatase that hydrolyzes fatty acyl-CoA to yield acyl-4'-phosphopantetheine and adenosine 3',5'-bisphosphate. Mediates the hydrolysis of a wide range of CoA esters, including choloyl-CoA and branched-chain fatty-acyl-CoA esters and at low substrate concentrations medium and long-chain fatty-acyl-CoA esters are the primary substrates. Highest activity seen with medium-chain acyl-CoA esters and higher rates of activity seen with the unsaturated acyl-CoA esters compared with the saturated esters. Exhibits decapping activity towards dpCoA-capped RNAs in vitro. This Mus musculus (Mouse) protein is Acyl-coenzyme A diphosphatase NUDT19 (Nudt19).